Here is a 513-residue protein sequence, read N- to C-terminus: Light-independent protochlorophyllide reductase subunit B (513 aa).

Position 36 (Asp-36) interacts with [4Fe-4S] cluster. Asp-299 functions as the Proton donor in the catalytic mechanism. 434-435 lines the substrate pocket; sequence GM.

It belongs to the ChlB/BchB/BchZ family. In terms of assembly, protochlorophyllide reductase is composed of three subunits; ChlL, ChlN and ChlB. Forms a heterotetramer of two ChlB and two ChlN subunits. The cofactor is [4Fe-4S] cluster.

The protein resides in the plastid. The protein localises to the chloroplast. It catalyses the reaction chlorophyllide a + oxidized 2[4Fe-4S]-[ferredoxin] + 2 ADP + 2 phosphate = protochlorophyllide a + reduced 2[4Fe-4S]-[ferredoxin] + 2 ATP + 2 H2O. Its pathway is porphyrin-containing compound metabolism; chlorophyll biosynthesis (light-independent). Functionally, component of the dark-operative protochlorophyllide reductase (DPOR) that uses Mg-ATP and reduced ferredoxin to reduce ring D of protochlorophyllide (Pchlide) to form chlorophyllide a (Chlide). This reaction is light-independent. The NB-protein (ChlN-ChlB) is the catalytic component of the complex. The chain is Light-independent protochlorophyllide reductase subunit B from Marchantia polymorpha (Common liverwort).